The following is a 942-amino-acid chain: DNA polymerase I (942 aa).

Residues 177 to 269 (EPDQLADLRG…LEAARIGVYD (93 aa)) form the 5'-3' exonuclease domain. The 3'-5' exonuclease domain occupies 340 to 522 (TIVRDATALA…LTERLQRQLE (183 aa)).

This sequence belongs to the DNA polymerase type-A family. As to quaternary structure, single-chain monomer with multiple functions.

It catalyses the reaction DNA(n) + a 2'-deoxyribonucleoside 5'-triphosphate = DNA(n+1) + diphosphate. In addition to polymerase activity, this DNA polymerase exhibits 3'-5' and 5'-3' exonuclease activity. The sequence is that of DNA polymerase I (polA) from Chloroflexus aurantiacus (strain ATCC 29366 / DSM 635 / J-10-fl).